The sequence spans 405 residues: Envelope glycoprotein M (405 aa).

Residues 1–17 (MKSSKNDTFVYRTWFKT) are Intravirion-facing. A helical transmembrane segment spans residues 18 to 38 (LVVYFVMFVMSAVVPITAMFP). At 39–76 (NLGYPCYFNALVDYGALNLTNYNLAHHLTPTLYLEPPE) the chain is on the virion surface side. The chain crosses the membrane as a helical span at residues 77–97 (MFVYITLVFIADCVAFIYYAC). Topologically, residues 98-121 (GEVALIKARKKVSGLTDLSAWVSA) are intravirion. The helical transmembrane segment at 122–142 (VGSPTVLFLAILKLWSIQVFI) threads the bilayer. At 143–149 (QVLSYKH) the chain is on the virion surface side. Residues 150–170 (VFLSAFVYFLHFLASVLHACA) traverse the membrane as a helical segment. The Intravirion segment spans residues 171–192 (CVTRFSPVWVVKAQDNSIPQDT). Residues 193–215 (FLWWVVFYLKPIVTNLYLGCLAL) form a helical membrane-spanning segment. Residues 216 to 245 (ETLVFSLSVFLALGNSFYFMVGDMVLGAVN) lie on the Virion surface side of the membrane. The helical transmembrane segment at 246 to 266 (LFLVLPIFWYILTEVWLASFL) threads the bilayer. Position 267 (R267) is a topological domain, intravirion. A helical membrane pass occupies residues 268-288 (HNFGFYCGMFIASIILILPLV). The Virion surface segment spans residues 289–299 (RYEAVFVSAKL). The chain crosses the membrane as a helical span at residues 300–320 (HTTVAINVAIIPILCSVAMLI). The Intravirion portion of the chain corresponds to 321–405 (RICRIFKSMR…TTDSEEEIFP (85 aa)). A disordered region spans residues 346–405 (LESEPRPRPSRTPSPGRNRRRSSTSSSSSRSTRRQRPVSTQALISSVLPMTTDSEEEIFP). Residues 386 to 397 (QALISSVLPMTT) are compositionally biased toward polar residues.

The protein belongs to the herpesviridae glycoprotein M family. As to quaternary structure, interacts (via N-terminus) with gN (via N-terminus). The gM-gN heterodimer forms the gCII complex.

Its subcellular location is the virion membrane. The protein localises to the host Golgi apparatus. It localises to the host trans-Golgi network. The protein resides in the host endosome membrane. It is found in the host nucleus inner membrane. Envelope glycoprotein important for virion assembly and egress. Plays a role in the correct incorporation of gH-gL into virion membrane. Directs the glycoprotein N (gN) to the host trans-Golgi network. The protein is Envelope glycoprotein M of Homo sapiens (Human).